Here is a 433-residue protein sequence, read N- to C-terminus: Zinc carboxypeptidase A 1 (433 aa).

The signal sequence occupies residues 1–28; sequence MVRLNSAAGSRWWAPAMAILAVALSVEA. The Peptidase M14 domain maps to 130–423; that stretch reads DYHTLEEIHA…DSLITLLEES (294 aa). 2 residues coordinate Zn(2+): H187 and E190. The cysteines at positions 253 and 276 are disulfide-linked. H312 contributes to the Zn(2+) binding site. E387 serves as the catalytic Proton donor/acceptor.

This sequence belongs to the peptidase M14 family. The cofactor is Zn(2+). Expressed in the posterior midgut in pupae and female adults.

Its subcellular location is the secreted. Involved in the digestion of the blood meal. This is Zinc carboxypeptidase A 1 from Anopheles gambiae (African malaria mosquito).